The sequence spans 317 residues: Putative S-adenosyl-L-methionine-dependent methyltransferase MSMEG_0093 (317 aa).

Residues Asp134 and 163–164 (DL) each bind S-adenosyl-L-methionine.

Belongs to the UPF0677 family.

In terms of biological role, exhibits S-adenosyl-L-methionine-dependent methyltransferase activity. The protein is Putative S-adenosyl-L-methionine-dependent methyltransferase MSMEG_0093 of Mycolicibacterium smegmatis (strain ATCC 700084 / mc(2)155) (Mycobacterium smegmatis).